We begin with the raw amino-acid sequence, 380 residues long: Succinyl-diaminopimelate desuccinylase (380 aa).

A Zn(2+)-binding site is contributed by His-71. Residue Asp-73 is part of the active site. Asp-104 serves as a coordination point for Zn(2+). The active-site Proton acceptor is the Glu-136. Zn(2+) contacts are provided by Glu-137, Glu-166, and His-351.

The protein belongs to the peptidase M20A family. DapE subfamily. In terms of assembly, homodimer. It depends on Zn(2+) as a cofactor. The cofactor is Co(2+).

It carries out the reaction N-succinyl-(2S,6S)-2,6-diaminopimelate + H2O = (2S,6S)-2,6-diaminopimelate + succinate. Its pathway is amino-acid biosynthesis; L-lysine biosynthesis via DAP pathway; LL-2,6-diaminopimelate from (S)-tetrahydrodipicolinate (succinylase route): step 3/3. Its function is as follows. Catalyzes the hydrolysis of N-succinyl-L,L-diaminopimelic acid (SDAP), forming succinate and LL-2,6-diaminopimelate (DAP), an intermediate involved in the bacterial biosynthesis of lysine and meso-diaminopimelic acid, an essential component of bacterial cell walls. The chain is Succinyl-diaminopimelate desuccinylase from Ehrlichia canis (strain Jake).